A 250-amino-acid chain; its full sequence is Sugar fermentation stimulation protein homolog (250 aa).

The protein belongs to the SfsA family.

The sequence is that of Sugar fermentation stimulation protein homolog from Synechococcus sp. (strain CC9311).